Consider the following 140-residue polypeptide: uncharacterized protein (140 aa).

Residues 21–42 (CPYCNYTNADVKAIKKHIKSKH) form a C2H2-type zinc finger.

The protein to M.jannaschii MJECL27.

This is an uncharacterized protein from Methanocaldococcus jannaschii (strain ATCC 43067 / DSM 2661 / JAL-1 / JCM 10045 / NBRC 100440) (Methanococcus jannaschii).